Consider the following 229-residue polypeptide: UPF0173 metal-dependent hydrolase SAR1785 (229 aa).

It belongs to the UPF0173 family.

The polypeptide is UPF0173 metal-dependent hydrolase SAR1785 (Staphylococcus aureus (strain MRSA252)).